Consider the following 2109-residue polypeptide: General transcription factor 3C polypeptide 1 (2109 aa).

The tract at residues leucine 467–lysine 521 is disordered. The segment covering glutamate 469–glutamate 482 has biased composition (acidic residues). Lysine 529 participates in a covalent cross-link: Glycyl lysine isopeptide (Lys-Gly) (interchain with G-Cter in SUMO2). Residues methionine 586–histidine 609 are disordered. Serine 667 carries the phosphoserine modification. The span at serine 718–glutamine 727 shows a compositional bias: polar residues. Residues serine 718–proline 775 are disordered. Phosphoserine is present on serine 739. A compositionally biased stretch (low complexity) spans serine 748 to serine 759. Residues glutamate 760 to asparagine 769 are compositionally biased toward basic and acidic residues. Glycyl lysine isopeptide (Lys-Gly) (interchain with G-Cter in SUMO2) cross-links involve residues lysine 770 and lysine 833. Disordered stretches follow at residues serine 836 to proline 857 and arginine 1059 to methionine 1082. Phosphoserine occurs at positions 1062 and 1068. The segment covering serine 1073–methionine 1082 has biased composition (basic and acidic residues). Residue lysine 1142 forms a Glycyl lysine isopeptide (Lys-Gly) (interchain with G-Cter in SUMO2) linkage. The segment at serine 1202–serine 1241 is disordered. Over residues arginine 1207–lysine 1221 the composition is skewed to basic residues. Serine 1253 and serine 1611 each carry phosphoserine. Residues lysine 1608–arginine 1631 are disordered. The span at leucine 1612–glutamate 1624 shows a compositional bias: acidic residues. Serine 1632 and serine 1653 each carry phosphoserine. The segment covering glutamate 1823–glutamine 1833 has biased composition (basic and acidic residues). The interval glutamate 1823–glutamate 1961 is disordered. Residues glutamate 1838–glutamate 1848 show a composition bias toward low complexity. 5 positions are modified to phosphoserine: serine 1856, serine 1865, serine 1868, serine 1896, and serine 1911. Low complexity predominate over residues leucine 1916–glutamine 1926. A compositionally biased stretch (polar residues) spans serine 1937–alanine 1947. Serine 1969 carries the phosphoserine modification.

It belongs to the TFIIIC subunit 1 family. In terms of assembly, part of the TFIIIC subcomplex TFIIIC2, consisting of six subunits, GTF3C1, GTF3C2, GTF3C3, GTF3C4, GTF3C5 and GTF3C6. Interacts with IGHMBP2. Interacts with MAF1.

The protein resides in the nucleus. In terms of biological role, required for RNA polymerase III-mediated transcription. Component of TFIIIC that initiates transcription complex assembly on tRNA and is required for transcription of 5S rRNA and other stable nuclear and cytoplasmic RNAs. Binds to the box B promoter element. This Homo sapiens (Human) protein is General transcription factor 3C polypeptide 1 (GTF3C1).